The primary structure comprises 213 residues: Heavy metal-binding protein HIP (213 aa).

A C1q domain is found at 80–213 (FKSHHVAFSA…MSTFTGFMLH (134 aa)).

As to expression, pallium, gill and liver.

It is found in the secreted. Its function is as follows. Binds heavy metals. May function as a carrier of divalent cations in plasma. This Mytilus edulis (Blue mussel) protein is Heavy metal-binding protein HIP.